Consider the following 203-residue polypeptide: Octanoyltransferase (203 aa).

Residues 30–203 (EDQDNYFFIT…HIIKEGRKLV (174 aa)) enclose the BPL/LPL catalytic domain. Residues 69–76 (RGGSVTFH), 135–137 (SVG), and 148–150 (GIS) each bind substrate. The active-site Acyl-thioester intermediate is cysteine 166.

Belongs to the LipB family.

It is found in the cytoplasm. The enzyme catalyses octanoyl-[ACP] + L-lysyl-[protein] = N(6)-octanoyl-L-lysyl-[protein] + holo-[ACP] + H(+). It participates in protein modification; protein lipoylation via endogenous pathway; protein N(6)-(lipoyl)lysine from octanoyl-[acyl-carrier-protein]: step 1/2. In terms of biological role, catalyzes the transfer of endogenously produced octanoic acid from octanoyl-acyl-carrier-protein onto the lipoyl domains of lipoate-dependent enzymes. Lipoyl-ACP can also act as a substrate although octanoyl-ACP is likely to be the physiological substrate. The sequence is that of Octanoyltransferase from Persephonella marina (strain DSM 14350 / EX-H1).